A 141-amino-acid polypeptide reads, in one-letter code: MKLETQYHGIIEYNENNIINLVKGMSGFENLKKFILVGIENNEVFSLFHSMEDKETAFIVSSPFYVKADYEVNLSEELVKELKIDSEKDVLIINTVNLSKDIKKMTTNLGAPIIININKHLGKQIIISDDEKMIKYPMIHS.

The protein belongs to the FliW family. Interacts with translational regulator CsrA and flagellin(s).

The protein resides in the cytoplasm. In terms of biological role, acts as an anti-CsrA protein, binds CsrA and prevents it from repressing translation of its target genes, one of which is flagellin. Binds to flagellin and participates in the assembly of the flagellum. This chain is Flagellar assembly factor FliW, found in Clostridium acetobutylicum (strain ATCC 824 / DSM 792 / JCM 1419 / IAM 19013 / LMG 5710 / NBRC 13948 / NRRL B-527 / VKM B-1787 / 2291 / W).